A 496-amino-acid polypeptide reads, in one-letter code: UDP-N-acetylmuramoyl-L-alanyl-D-glutamate--2,6-diaminopimelate ligase (496 aa).

2 residues coordinate UDP-N-acetyl-alpha-D-muramoyl-L-alanyl-D-glutamate: Leu-29 and Ser-31. 118 to 124 lines the ATP pocket; the sequence is GTNGKTT. Residues Asn-159, 160–161, Ser-187, Gln-193, and Arg-195 contribute to the UDP-N-acetyl-alpha-D-muramoyl-L-alanyl-D-glutamate site; that span reads TT. Residue Lys-227 is modified to N6-carboxylysine. Residues Arg-392, 416–419, Gly-467, and Glu-471 contribute to the meso-2,6-diaminopimelate site; that span reads DNPR. The short motif at 416-419 is the Meso-diaminopimelate recognition motif element; that stretch reads DNPR.

It belongs to the MurCDEF family. MurE subfamily. The cofactor is Mg(2+). In terms of processing, carboxylation is probably crucial for Mg(2+) binding and, consequently, for the gamma-phosphate positioning of ATP.

The protein localises to the cytoplasm. It catalyses the reaction UDP-N-acetyl-alpha-D-muramoyl-L-alanyl-D-glutamate + meso-2,6-diaminopimelate + ATP = UDP-N-acetyl-alpha-D-muramoyl-L-alanyl-gamma-D-glutamyl-meso-2,6-diaminopimelate + ADP + phosphate + H(+). It participates in cell wall biogenesis; peptidoglycan biosynthesis. Catalyzes the addition of meso-diaminopimelic acid to the nucleotide precursor UDP-N-acetylmuramoyl-L-alanyl-D-glutamate (UMAG) in the biosynthesis of bacterial cell-wall peptidoglycan. This is UDP-N-acetylmuramoyl-L-alanyl-D-glutamate--2,6-diaminopimelate ligase from Wigglesworthia glossinidia brevipalpis.